The following is a 293-amino-acid chain: Protease HtpX (293 aa).

Transmembrane regions (helical) follow at residues 4 to 24 (IALF…VLSL) and 32 to 52 (VTGL…VSLL). Residue histidine 139 participates in Zn(2+) binding. The active site involves glutamate 140. Histidine 143 contacts Zn(2+). 2 helical membrane passes run 158–178 (VVNT…AGFL) and 193–213 (LIYF…ASII). Glutamate 222 provides a ligand contact to Zn(2+).

This sequence belongs to the peptidase M48B family. Zn(2+) serves as cofactor.

It localises to the cell inner membrane. The protein is Protease HtpX of Cronobacter sakazakii (strain ATCC BAA-894) (Enterobacter sakazakii).